The following is a 306-amino-acid chain: Large ribosomal subunit protein uL2m (306 aa).

Residues 1 to 60 constitute a mitochondrion transit peptide; that stretch reads MALRVVTRALGSLSLTPRIAAVPGPSLLPAAQVTNNVLLQLPSASMLLPSRPLLTSVALS.

The protein belongs to the universal ribosomal protein uL2 family. In terms of assembly, component of the mitochondrial ribosome large subunit (39S) which comprises a 16S rRNA and about 50 distinct proteins.

It localises to the mitochondrion. The protein is Large ribosomal subunit protein uL2m (MRPL2) of Bos taurus (Bovine).